The chain runs to 146 residues: MAGPLRAPLLLLAILAVALAVSPAAGSSPGKPPRLVGGPMDASVEEEGVRRALDFAVGEYNKASNDMYHSRALQVVRARKQIVAGVNYFLDVELGRTTCTKTQPNLDNCPFHDQPHLKRKAFCSFQIYAVPWQGTMTLSKSTCQDA.

Residues 1-26 form the signal peptide; sequence MAGPLRAPLLLLAILAVALAVSPAAG. Phosphoserine; by FAM20C is present on serine 43. Residues 81-85 carry the Secondary area of contact motif; sequence QIVAG. Disulfide bonds link cysteine 99/cysteine 109 and cysteine 123/cysteine 143.

This sequence belongs to the cystatin family. As to quaternary structure, homodimer. The Thr-25 variant is O-glycosylated with a core 1 or possibly core 8 glycan. The signal peptide of the O-glycosylated Thr-25 variant is cleaved between Ala-20 and Val-21. In terms of tissue distribution, expressed in submandibular and sublingual saliva but not in parotid saliva (at protein level). Expressed in various body fluids, such as the cerebrospinal fluid and plasma. Expressed in highest levels in the epididymis, vas deferens, brain, thymus, and ovary and the lowest in the submandibular gland.

Its subcellular location is the secreted. As an inhibitor of cysteine proteinases, this protein is thought to serve an important physiological role as a local regulator of this enzyme activity. This is Cystatin-C (CST3) from Homo sapiens (Human).